We begin with the raw amino-acid sequence, 141 residues long: Phage-like element PBSX protein XkdS (141 aa).

It to B.subtilis YqbS.

This Bacillus subtilis (strain 168) protein is Phage-like element PBSX protein XkdS (xkdS).